Here is a 664-residue protein sequence, read N- to C-terminus: Macoilin (664 aa).

Helical transmembrane passes span 28-48, 75-95, 120-140, and 154-174; these read TFLYLKFLVVWALVLLADFVL, AFSVFFVCVAFTSNIICLLFI, VCLPTVSLWILFVYIEAAIRF, and FAAHCIGYPVVTLGFGFKSYV. Residues 253-265 are compositionally biased toward basic and acidic residues; sequence REKGKEKDKDAKK. The segment at 253 to 274 is disordered; that stretch reads REKGKEKDKDAKKHNLGINNNN. Phosphoserine is present on S305. Positions 320–348 are enriched in polar residues; the sequence is KNYKNASGVVNSSPRSHSATNGSIPSSSS. The segment at 320–367 is disordered; it reads KNYKNASGVVNSSPRSHSATNGSIPSSSSKNEKKQKCTSKSPSAHKDL. N324 carries an N-linked (GlcNAc...) asparagine glycan. Residue S332 is modified to Phosphoserine. N-linked (GlcNAc...) asparagine glycans are attached at residues N340 and N452. Positions 630-664 are disordered; sequence TSPLSPVSPHYSSKFVETSPSGLDPNASVYQPLKK. 2 positions are modified to phosphoserine: S631 and S634. An N-linked (GlcNAc...) asparagine glycan is attached at N655.

Belongs to the macoilin family.

It is found in the rough endoplasmic reticulum membrane. The protein resides in the nucleus membrane. Plays a role in the regulation of neuronal activity. The polypeptide is Macoilin (MACO1) (Sus scrofa (Pig)).